Here is a 189-residue protein sequence, read N- to C-terminus: Hypoxanthine/guanine phosphoribosyltransferase (189 aa).

It belongs to the purine/pyrimidine phosphoribosyltransferase family. Archaeal HPRT subfamily. In terms of assembly, homodimer.

Its subcellular location is the cytoplasm. It catalyses the reaction IMP + diphosphate = hypoxanthine + 5-phospho-alpha-D-ribose 1-diphosphate. It carries out the reaction GMP + diphosphate = guanine + 5-phospho-alpha-D-ribose 1-diphosphate. It participates in purine metabolism; IMP biosynthesis via salvage pathway; IMP from hypoxanthine: step 1/1. Its function is as follows. Catalyzes a salvage reaction resulting in the formation of IMP that is energically less costly than de novo synthesis. The chain is Hypoxanthine/guanine phosphoribosyltransferase from Methanosarcina mazei (strain ATCC BAA-159 / DSM 3647 / Goe1 / Go1 / JCM 11833 / OCM 88) (Methanosarcina frisia).